Here is a 486-residue protein sequence, read N- to C-terminus: MARRIKFQRLAEMRPTMTRFSTVALIVSKSSPNIFYDKMSGTERGVLSLTIRDSPNHLTNCKCWGQRDCVDEYAAMLQIGHVVDIVGAKVMSIPFAAPGEQRYQPQATVSCALVVNEGSGYVVRHDNDDFGQITILQQLLHQPIRPLGAVLKLADVRSGLGFPDKIITTNVNLLVVVAAVRPVRQIKRKLQGPLSEVQELLQCLEVIVIDASYPEGMLLSVWQPDWIQRAQQWQPRRTVLHLIDVRVSYSNFHRSLVLSHSNCTLICENPQAAGDDCRLLLAFAATVPLTTFSGCDQAELDNMPAVASIQAQMTVRQIYSRAEGELQDPSIHQFTAVLYGMVTKFDLDGLTSHVNRKCIACQQHIPRNLQDCASDACQQYFSLDNDEPRSISYFNINIHLSDQTGTLVEARLAGHPAERILGLRAEDFERLAEREKSELKWRFLLKYFEVRLMIKKPVGVRNHLVIVVVDMQAIPLEKLVANMVVF.

The segment at residues 166–285 (IITTNVNLLV…DCRLLLAFAA (120 aa)) is a DNA-binding region (OB).

It belongs to the MEIOB family. In terms of assembly, interacts with mei-9 and Ercc1.

In terms of biological role, single-stranded DNA-binding protein required for meiosis. May be involved in the resolution of recombination intermediates into crossovers in the meiotic recombination pathway. The chain is Protein hold'em (hdm) from Drosophila melanogaster (Fruit fly).